Reading from the N-terminus, the 80-residue chain is Phycocyanin-645 alpha-1 chain (80 aa).

Residue Arg-16 participates in (2R,3E)-phycocyanobilin binding. 4 residues coordinate mesobiliverdin: Cys-18, Gln-24, Tyr-25, and Lys-40. The 15,16-dihydrobiliverdin site is built by Pro-71 and Ile-73.

This sequence belongs to the phycoerythrin family. In terms of assembly, heterotetramer of 2 different alpha chains and 2 identical beta chains which form 2 alpha-beta heterodimers within the heterotetramer. In terms of processing, contains one phycocyanobilin chromophore, one mesobiliverdin chromophore and one 15,16-dihydrobiliverdin chromophore with binding mediated by both the alpha and beta subunits.

The protein resides in the plastid. The protein localises to the chloroplast thylakoid membrane. In terms of biological role, light-harvesting photosynthetic tetrapyrrole chromophore-protein from the phycobiliprotein complex. This chain is Phycocyanin-645 alpha-1 chain, found in Chroomonas sp.